Reading from the N-terminus, the 318-residue chain is MAKSSKVSIVGAGGNVGSIVAYSVAMQGLAHEVILVDRDKDRAQGKALDMNQAAAAMRTHSIVRAANDYTDIEGSKVVVITAGFPRKPGMSRDDLLFANADIVSEVVENVVKHAPDSIIIVVTNPLDTMTYVALKKSGFPKNRVIGMAGILDGARMTHFIYEKLGFGAGQIRATVIGGHGDYMVPLPRYSTVAGIPITDLLTPQELQEVVEATKNGGAQIVKLMGTSAYFAPGKATAIMVEAILQDSKKIYPCSTLLEGEYGVHGIPNGVPVTLGANGVEEIIELQLTPREREEFQRSVDSVKELIDVLENQNYFGEK.

Residues 11 to 17 (GAGGNVG) and Asp-37 contribute to the NAD(+) site. The substrate site is built by Arg-86 and Arg-92. NAD(+) contacts are provided by residues Asn-99 and 122–124 (VTN). The substrate site is built by Asn-124 and Arg-155. His-179 (proton acceptor) is an active-site residue.

It belongs to the LDH/MDH superfamily. MDH type 3 family.

It carries out the reaction (S)-malate + NAD(+) = oxaloacetate + NADH + H(+). In terms of biological role, catalyzes the reversible oxidation of malate to oxaloacetate. The protein is Malate dehydrogenase of Nitratiruptor sp. (strain SB155-2).